Reading from the N-terminus, the 475-residue chain is MEMASSAGSWLSGCLIPLVFLRLSVHVSGHAGDAGKFHVALLGGTAELLCPLSLWPGTVPKEVRWLRSPFPQRSQAVHIFRDGKDQDEDLMPEYKGRTVLVRDAQEGSVTLQILDVRLEDQGSYRCLIQVGNLSKEDTVILQVAAPSVGSLSPSAVALAVILPVLVLLIMVCLCLIWKQRRAKEKLLYEHVTEVDNLLSDHAKEKGKLHKAVKKLRSELKLKRAAANSGWRRARLHFVAVTLDPDTAHPKLILSEDQRCVRLGDRRQPVPDNPQRFDFVVSILGSEYFTTGCHYWEVYVGDKTKWILGVCSESVSRKGKVTASPANGHWLLRQSRGNEYEALTSPQTSFRLKEPPRCVGIFLDYEAGVISFYNVTNKSHIFTFTHNFSGPLRPFFEPCLHDGGKNTAPLVICSELHKSEESIVPRPEGKGHANGDVSLKVNSSLLPPKAPELKDIILSLPPDLGPALQELKAPSF.

A signal peptide spans 1-29; sequence MEMASSAGSWLSGCLIPLVFLRLSVHVSG. Positions 30-140 constitute an Ig-like V-type domain; the sequence is HAGDAGKFHV…GNLSKEDTVI (111 aa). The Extracellular segment spans residues 30–155; sequence HAGDAGKFHV…PSVGSLSPSA (126 aa). The cysteines at positions 50 and 126 are disulfide-linked. An N-linked (GlcNAc...) asparagine glycan is attached at N132. Residues 156-176 traverse the membrane as a helical segment; sequence VALAVILPVLVLLIMVCLCLI. At 177-475 the chain is on the cytoplasmic side; that stretch reads WKQRRAKEKL…ALQELKAPSF (299 aa). Residues 220–418 form the B30.2/SPRY domain; that stretch reads KLKRAAANSG…LVICSELHKS (199 aa). Position 418 is a phosphoserine (S418).

Belongs to the immunoglobulin superfamily. BTN/MOG family. In terms of processing, glycosylated. As to expression, expressed in erythroid-enriched bone marrow (at protein level). Highly expressed in bone marrow and to a lower extent in leukocytes, thymus, lymph node and spleen.

The protein resides in the cell membrane. Its subcellular location is the cytoplasm. Functionally, possible role as a cell-adhesion or receptor molecule of erythroid cells. This is Erythroid membrane-associated protein (ERMAP) from Homo sapiens (Human).